A 174-amino-acid chain; its full sequence is Crossover junction endodeoxyribonuclease RuvC (174 aa).

Catalysis depends on residues aspartate 8, glutamate 67, and aspartate 139. Positions 8, 67, and 139 each coordinate Mg(2+).

The protein belongs to the RuvC family. Homodimer which binds Holliday junction (HJ) DNA. The HJ becomes 2-fold symmetrical on binding to RuvC with unstacked arms; it has a different conformation from HJ DNA in complex with RuvA. In the full resolvosome a probable DNA-RuvA(4)-RuvB(12)-RuvC(2) complex forms which resolves the HJ. It depends on Mg(2+) as a cofactor.

It localises to the cytoplasm. It catalyses the reaction Endonucleolytic cleavage at a junction such as a reciprocal single-stranded crossover between two homologous DNA duplexes (Holliday junction).. The RuvA-RuvB-RuvC complex processes Holliday junction (HJ) DNA during genetic recombination and DNA repair. Endonuclease that resolves HJ intermediates. Cleaves cruciform DNA by making single-stranded nicks across the HJ at symmetrical positions within the homologous arms, yielding a 5'-phosphate and a 3'-hydroxyl group; requires a central core of homology in the junction. The consensus cleavage sequence is 5'-(A/T)TT(C/G)-3'. Cleavage occurs on the 3'-side of the TT dinucleotide at the point of strand exchange. HJ branch migration catalyzed by RuvA-RuvB allows RuvC to scan DNA until it finds its consensus sequence, where it cleaves and resolves the cruciform DNA. This chain is Crossover junction endodeoxyribonuclease RuvC, found in Pseudomonas fluorescens (strain SBW25).